The primary structure comprises 422 residues: Ubiquitin-conjugating enzyme E2 Q1 (422 aa).

At Met-1 the chain carries N-acetylmethionine. The span at 1-15 (MQQPQPQGQQQPGPG) shows a compositional bias: low complexity. Disordered stretches follow at residues 1–40 (MQQP…PGPC) and 174–221 (PLPA…EDDG). Gly residues predominate over residues 16 to 35 (QQLGGQGAAPGAGGGPGGGP). Over residues 185-200 (VSSEDEDEEMPEDTED) the composition is skewed to acidic residues. Over residues 212 to 221 (AEGKKSEDDG) the composition is skewed to basic and acidic residues. Positions 251 to 415 (QATDRLMKEL…VQIHEKNGWY (165 aa)) constitute a UBC core domain. The active-site Glycyl thioester intermediate is the Cys-351.

Belongs to the ubiquitin-conjugating enzyme family. In terms of assembly, monomer and homodimer. Only the homodimer is linked to ubiquitin through thiolester activation. Interacts (via N-terminus) with B4GALT1 (via N-terminal cytoplasmic domain). The interaction is direct. In terms of processing, autoubiquitinated in vitro in the presence of NEDD4L. Widely expressed.

It is found in the nucleus. It localises to the cell projection. Its subcellular location is the filopodium. The protein localises to the cytoplasm. The protein resides in the cytosol. The enzyme catalyses S-ubiquitinyl-[E1 ubiquitin-activating enzyme]-L-cysteine + [E2 ubiquitin-conjugating enzyme]-L-cysteine = [E1 ubiquitin-activating enzyme]-L-cysteine + S-ubiquitinyl-[E2 ubiquitin-conjugating enzyme]-L-cysteine.. Its pathway is protein modification; protein ubiquitination. Its function is as follows. Catalyzes the covalent attachment of ubiquitin to other proteins. May be involved in hormonal homeostasis in females. Involved in regulation of B4GALT1 cell surface expression, B4GALT1-mediated cell adhesion to laminin and embryoid body formation. In Homo sapiens (Human), this protein is Ubiquitin-conjugating enzyme E2 Q1 (UBE2Q1).